Here is a 272-residue protein sequence, read N- to C-terminus: RELT-like protein 1 (272 aa).

The signal sequence occupies residues 1 to 23 (MALWGLPGSAVLAASVFVGGAVS). Residues 24-58 (SPLVAADNTGSHTLHSRAETTPSSPTNNPGNGHPE) lie on the Extracellular side of the membrane. Positions 33–52 (GSHTLHSRAETTPSSPTNNP) are disordered. A helical membrane pass occupies residues 59-79 (YIAYVLVPVFFVMGLLGVLIC). At 80–272 (HLLKKKGYRC…PVKRERSDTE (193 aa)) the chain is on the cytoplasmic side. Residues 90–114 (TTEAEQEVEEEKVEKIELNDSINEN) adopt a coiled-coil conformation. Ser-110 and Ser-115 each carry phosphoserine. 2 disordered regions span residues 146 to 171 (DIES…PGAT) and 235 to 272 (EHKS…SDTE). Pro residues predominate over residues 156 to 166 (PGSPPVSPGPL). Positions 235-245 (EHKSNQKERRS) are enriched in basic and acidic residues. Phosphoserine occurs at positions 245 and 248.

Belongs to the RELT family. Interacts with RELT, RELL2, OXSR1 and PLSCR1.

The protein resides in the cell membrane. Its function is as follows. Induces activation of MAPK14/p38 cascade, when overexpressed. Induces apoptosis, when overexpressed. The chain is RELT-like protein 1 (Rell1) from Mus musculus (Mouse).